A 926-amino-acid chain; its full sequence is DNA topoisomerase 3-alpha (926 aa).

The region spanning 10–154 (TVLNVAEKPS…NLFIRRAHFS (145 aa)) is the Toprim domain. Mg(2+)-binding residues include E16, D123, and D125. A Topo IA-type catalytic domain is found at 172–604 (NQLFAEAVDA…CLQQMKACFL (433 aa)). Residues 219 to 224 (SYGPCQ) form an interaction with DNA region. Y342 serves as the catalytic O-(5'-phospho-DNA)-tyrosine intermediate. The C4-type zinc-finger motif lies at 642–670 (CNLCNESDMALRKNRDGNFMVGCMNYPQC). Disordered regions lie at residues 740-760 (SRSQARRTPGTAPSNNIQGSN) and 775-806 (HASTNCPSRVPASRNSRPTATNPRNDESTVSC). Residues 750 to 760 (TAPSNNIQGSN) show a composition bias toward polar residues. Residues 767–782 (CIHCQQRGHASTNCPS) form a CCHC-type 1 zinc finger. Zn(2+) is bound by residues C806, C809, C831, and C836. The segment at 806–845 (CNTCGSQCVLRTANTEANRGRQFFSCPTQGCSFFAWEDSI) adopts a GRF-type zinc-finger fold. Residues 849–890 (SGNATTGSNSGGSGRRGSRGRGRGGRGGQSSGGRRGSGTSFV) are disordered. The segment covering 873 to 884 (GRGGQSSGGRRG) has biased composition (gly residues). The CCHC-type 2 zinc finger occupies 901–917 (RCFSCGDPSHFANACPN).

The protein belongs to the type IA topoisomerase family. As to quaternary structure, component of the RMI complex, containing at least TOP3A and RMI1. The RMI complex interacts with RECQL4A. It depends on Mg(2+) as a cofactor.

It carries out the reaction ATP-independent breakage of single-stranded DNA, followed by passage and rejoining.. Functionally, releases the supercoiling and torsional tension of DNA introduced during the DNA replication and transcription by transiently cleaving and rejoining one strand of the DNA duplex. Introduces a single-strand break via transesterification at a target site in duplex DNA. The scissile phosphodiester is attacked by the catalytic tyrosine of the enzyme, resulting in the formation of a DNA-(5'-phosphotyrosyl)-enzyme intermediate and the expulsion of a 3'-OH DNA strand. The free DNA strand then undergoes passage around the unbroken strand thus removing DNA supercoils. Finally, in the religation step, the DNA 3'-OH attacks the covalent intermediate to expel the active-site tyrosine and restore the DNA phosphodiester backbone. Essential component of the RMI complex, a complex that plays an important role in the resolution step of homologous recombination, in a process called Holliday Junction dissolution, to limit DNA crossover formation in cells. Together with RMI1, is essential for the resolution of meiotic recombination intermediates, a step that prevents entanglement of the parental chromosomes. May have DNA decatenation activity. The polypeptide is DNA topoisomerase 3-alpha (TOP3A) (Arabidopsis thaliana (Mouse-ear cress)).